Consider the following 115-residue polypeptide: Cholecystokinin (115 aa).

Positions 1 to 20 (MNSGVSLCVLMAVLAAGALT) are cleaved as a signal peptide. Residues 21–44 (QPVPPAEPAGSGLQRAEEAPRRQL) constitute a propeptide that is removed on maturation. The disordered stretch occupies residues 21–51 (QPVPPAEPAGSGLQRAEEAPRRQLRAVQRTD). An O-linked (Xyl...) (chondroitin sulfate) serine glycan is attached at Ser31. The residue at position 97 (Tyr97) is a Sulfotyrosine. A Phenylalanine amide modification is found at Phe103. The propeptide occupies 107-115 (SAEEYEYPS). A sulfotyrosine mark is found at Tyr111 and Tyr113.

The protein belongs to the gastrin/cholecystokinin family. As to quaternary structure, binds to CCK-A receptors in the pancreas and CCK-B receptors in the brain. Post-translationally, the precursor is cleaved by proteases to produce a number of active cholecystokinins. The precursor is cleaved by ACE, which removes the Gly-Arg-Arg peptide at the C-terminus, leading to mature hormone.

It is found in the secreted. This peptide hormone induces gall bladder contraction and the release of pancreatic enzymes in the gut. Its function in the brain is not clear. Binding to CCK-A receptors stimulates amylase release from the pancreas, binding to CCK-B receptors stimulates gastric acid secretion. The sequence is that of Cholecystokinin (CCK) from Macaca fascicularis (Crab-eating macaque).